The following is a 290-amino-acid chain: Small ribosomal subunit protein uS2 (290 aa).

The span at 263-282 shows a compositional bias: low complexity; the sequence is ATAGATWEAEAGGDWAAESA. The disordered stretch occupies residues 263–290; that stretch reads ATAGATWEAEAGGDWAAESAQPNPETKW.

The protein belongs to the universal ribosomal protein uS2 family. Component of the small ribosomal subunit. Mature ribosomes consist of a small (40S) and a large (60S) subunit. The 40S subunit contains about 33 different proteins and 1 molecule of RNA (18S). The 60S subunit contains about 49 different proteins and 3 molecules of RNA (25S, 5.8S and 5S). Interacts with rps21.

It is found in the cytoplasm. Required for the assembly and/or stability of the 40S ribosomal subunit. Required for the processing of the 20S rRNA-precursor to mature 18S rRNA in a late step of the maturation of 40S ribosomal subunits. The chain is Small ribosomal subunit protein uS2 (rps0) from Talaromyces stipitatus (strain ATCC 10500 / CBS 375.48 / QM 6759 / NRRL 1006) (Penicillium stipitatum).